We begin with the raw amino-acid sequence, 301 residues long: Troponin T, cardiac muscle (301 aa).

The span at 1-72 shows a compositional bias: acidic residues; that stretch reads MSDAEEVVEE…EAKDAEEGPV (72 aa). Disordered stretches follow at residues 1–97 and 125–224; these read MSDA…DGER and NRKK…KKKI. The residue at position 2 (Ser-2) is an N-acetylserine. A Phosphoserine; by CK2 modification is found at Ser-2. Composition is skewed to basic and acidic residues over residues 125 to 186 and 206 to 224; these read NRKK…DEAR and QTER…KKKI. Residue Thr-207 is modified to Phosphothreonine; by PKC/PRKCA. A Phosphoserine; by PKC/PRKCA modification is found at Ser-211. Thr-216 is subject to Phosphothreonine; by PKC/PRKCA and RAF1. Residue Thr-297 is modified to Phosphothreonine; by PKC/PRKCA.

This sequence belongs to the troponin T family. Phosphorylation at Thr-216 by PRKCA induces significant reduction in myofilament calcium sensitivity and actomyosin ATPase activity.

Functionally, troponin T is the tropomyosin-binding subunit of troponin, the thin filament regulatory complex which confers calcium-sensitivity to striated muscle actomyosin ATPase activity. This Mus musculus (Mouse) protein is Troponin T, cardiac muscle (Tnnt2).